Reading from the N-terminus, the 565-residue chain is MLSFNNTTSASSFQSASSRYLMSSSSSIGPPQQQSAKLFPEHFYPSGLSPRQSEALERLRPNTASRERNIPIQFTGKNPTTNSALEEYKPVPHVQVTSPKSSIVPNFVSEQRGLQPQPTSQAPTNYRQFVAAPRSPRGYGDYPEMTGKASAAGDSEPVQIPIKTQTPITQARAQETKIPTIVSPHPVYYYDNQEQPIQQIREEQPNATMETKVTGQGQPKRVGRWTLAQLRQTDGIIPSQAGWNKGDSQKLMTNFGTPRNTNTRVKSENLQEIPEDIANRTHGEVRLQSGTNKYCSQRGMTGFGSGRDVCREGVRVAQNPADLAELPEEKIRMSEGIVRLQAGTNKYDSQKGMTGFGTGRRETTKMVDSKHPEYDHEKPDQSEIPLQSGTNKFASQKGMTGFGTARRETTKMVDSNHPDYSHECSIDQTTIPSQMGSNQYASQKGMTGFGQPRWEVLDPSISWQNRKSQGMVRLQSGTNRFASQAGMIGFGTCRNTTFEAEGGELPYEAMKVSETIIPSQAGWNKGDSQKKMTSFGAPRDVKGKHLKRIWELEYPEEAEISLDRL.

The segment covering 1 to 27 (MLSFNNTTSASSFQSASSRYLMSSSSS) has biased composition (low complexity). Disordered stretches follow at residues 1 to 83 (MLSF…TTNS) and 237 to 262 (IPSQ…RNTN). Over residues 54-69 (EALERLRPNTASRERN) the composition is skewed to basic and acidic residues. Calponin-like repeat units lie at residues 237–262 (IPSQ…RNTN), 285–310 (VRLQ…RDVC), and 338–363 (VRLQ…RRET). Positions 250–262 (KLMTNFGTPRNTN) are enriched in polar residues. The span at 369–381 (SKHPEYDHEKPDQ) shows a compositional bias: basic and acidic residues. Residues 369–400 (SKHPEYDHEKPDQSEIPLQSGTNKFASQKGMT) form a disordered region. Polar residues predominate over residues 384 to 398 (IPLQSGTNKFASQKG). 4 Calponin-like repeats span residues 384 to 409 (IPLQ…RRET), 431 to 456 (IPSQ…RWEV), 472 to 497 (VRLQ…RNTT), and 517 to 542 (IPSQ…RDVK).

Belongs to the calponin family. In terms of assembly, monomer. Interacts with F-actin. Interacts with myosin. In terms of tissue distribution, expressed in the body wall muscles. Isoform a: Expression in the pharynx, anal depressor muscle, uterine muscle, vulva and unidentified neurons in the head and the ventral region. Isoform b: Expression in the body wall muscles, spermatheca, vulva and in the myoepithelial sheath.

It localises to the cytoplasm. Its subcellular location is the myofibril. The protein localises to the sarcomere. The protein resides in the i band. Functionally, thin filament-associated protein that is implicated in actin bundling and actin filament dynamics. Exhibits F-actin cross-linking activity. Required for the maintenance of sarcomeric actin organization in striated muscles. Competes with unc-60 isoform b for actin binding and protects actin filaments from depolymerization by unc-60, thereby contributing to actin filament stability. Cooperates with myosin to form actomyosin bundles and inhibits actomyosin ATPase activity and actomyosin motility. Might protect the myofilaments from mechanical stress. Its function is as follows. Acts as a negative regulator of myosin-dependent contractility of smooth muscle-like cells in the somatic gonad. The polypeptide is Protein unc-87 (unc-87) (Caenorhabditis elegans).